The primary structure comprises 553 residues: Methyl-coenzyme M reductase II subunit alpha (553 aa).

Residue glutamine 150 coordinates coenzyme F430. Residues arginine 228, 259 to 260 (KH), and arginine 273 each bind coenzyme B. A Pros-methylhistidine modification is found at histidine 260. Arginine 274 is modified (5-methylarginine). Coenzyme M is bound at residue tyrosine 335. Glutamine 402 carries the post-translational modification 2-methylglutamine. Residue tyrosine 446 participates in coenzyme M binding. Glycine 447 carries the 1-thioglycine modification. Aspartate 452 carries the (Z)-2,3-didehydroaspartate modification. Cysteine 454 bears the S-methylcysteine mark.

The protein belongs to the methyl-coenzyme M reductase alpha subunit family. MCR is a hexamer of two alpha, two beta, and two gamma chains, forming a dimer of heterotrimers. It depends on coenzyme F430 as a cofactor. The alpha subunit contains six modified amino acids near the active site region. Is methylated on His-260, Arg-274, Gln-402 and Cys-454, probably by the action of specific S-adenosylmethionine-dependent methyltransferases. Also contains a thioglycine at position 447, forming a thiopeptide bond. Contains a didehydroaspartate residue at position 452. The methylation on C5 of Arg-274 is a post-translational methylation not essential in vivo, but which plays a role for the stability and structural integrity of MCR.

The catalysed reaction is coenzyme B + methyl-coenzyme M = methane + coenzyme M-coenzyme B heterodisulfide. Its pathway is one-carbon metabolism; methyl-coenzyme M reduction; methane from methyl-coenzyme M: step 1/1. Its function is as follows. Component of the methyl-coenzyme M reductase (MCR) I that catalyzes the reductive cleavage of methyl-coenzyme M (CoM-S-CH3 or 2-(methylthio)ethanesulfonate) using coenzyme B (CoB or 7-mercaptoheptanoylthreonine phosphate) as reductant which results in the production of methane and the mixed heterodisulfide of CoB and CoM (CoM-S-S-CoB). This is the final step in methanogenesis. The sequence is that of Methyl-coenzyme M reductase II subunit alpha (mrtA) from Methanothermobacter marburgensis (strain ATCC BAA-927 / DSM 2133 / JCM 14651 / NBRC 100331 / OCM 82 / Marburg) (Methanobacterium thermoautotrophicum).